Reading from the N-terminus, the 95-residue chain is Protein TusB (95 aa).

The protein belongs to the DsrH/TusB family. As to quaternary structure, heterohexamer, formed by a dimer of trimers. The hexameric TusBCD complex contains 2 copies each of TusB, TusC and TusD. The TusBCD complex interacts with TusE.

Its subcellular location is the cytoplasm. Functionally, part of a sulfur-relay system required for 2-thiolation of 5-methylaminomethyl-2-thiouridine (mnm(5)s(2)U) at tRNA wobble positions. The polypeptide is Protein TusB (Pectobacterium atrosepticum (strain SCRI 1043 / ATCC BAA-672) (Erwinia carotovora subsp. atroseptica)).